The following is a 278-amino-acid chain: Urease accessory protein UreD (278 aa).

The protein belongs to the UreD family. As to quaternary structure, ureD, UreF and UreG form a complex that acts as a GTP-hydrolysis-dependent molecular chaperone, activating the urease apoprotein by helping to assemble the nickel containing metallocenter of UreC. The UreE protein probably delivers the nickel.

Its subcellular location is the cytoplasm. Functionally, required for maturation of urease via the functional incorporation of the urease nickel metallocenter. The polypeptide is Urease accessory protein UreD (Blochmanniella pennsylvanica (strain BPEN)).